Consider the following 309-residue polypeptide: Taste receptor type 2 member 43 (309 aa).

Residue Met-1 is a topological domain, extracellular. The helical transmembrane segment at 2–22 (ITFLPIIFSSLVVVTFVIGNF) threads the bilayer. At 23-46 (ANGFIALVNSIEWFKRQKISFADQ) the chain is on the cytoplasmic side. The helical transmembrane segment at 47 to 67 (ILTALAVSRVGLLWVLLLNWY) threads the bilayer. At 68–86 (STVLNPAFNSVEVRTTAYN) the chain is on the extracellular side. Residues 87 to 107 (IWAVINHFSNWLATTLSIFYL) traverse the membrane as a helical segment. Residues 108-126 (LKIANFSNFIFLHLKRRVK) lie on the Cytoplasmic side of the membrane. Residues 127-147 (SVILVMLLGPLLFLACHLFVI) traverse the membrane as a helical segment. Over 148–178 (NMNEIVRTKEFEGNMTWKIKLKSAMYFSNMT) the chain is Extracellular. 2 N-linked (GlcNAc...) asparagine glycosylation sites follow: Asn-161 and Asn-176. Residues 179–199 (VTMVANLVPFTLTLLSFMLLI) form a helical membrane-spanning segment. Over 200–229 (CSLCKHLKKMQLHGKGSQDPSTKVHIKALQ) the chain is Cytoplasmic. A helical transmembrane segment spans residues 230 to 250 (TVISFLLLCAIYFLSIMISVW). Residues 251–259 (SFGSLENKP) are Extracellular-facing. Residues 260–280 (VFMFCKAIRFSYPSIHPFILI) traverse the membrane as a helical segment. The Cytoplasmic portion of the chain corresponds to 281 to 309 (WGNKKLKQTFLSVFWQMRYWVKGEKTSSP).

The protein belongs to the G-protein coupled receptor T2R family. Expressed in subsets of taste receptor cells of the tongue and exclusively in gustducin-positive cells. Expressed in airway epithelia.

It localises to the membrane. Its subcellular location is the cell projection. It is found in the cilium membrane. Gustducin-coupled receptor immplicated in the perception of bitter compounds in the oral cavity and the gastrointestinal tract. Signals through PLCB2 and the calcium-regulated cation channel TRPM5. Activated by the sulfonyl amide sweeteners saccharin and acesulfame K. In airway epithelial cells, binding of bitter compounds increases the intracellular calcium ion concentration and stimulates ciliary beat frequency. May act as chemosensory receptors in airway epithelial cells to detect and eliminate potential noxious agents from the airways. The polypeptide is Taste receptor type 2 member 43 (TAS2R43) (Homo sapiens (Human)).